Here is a 261-residue protein sequence, read N- to C-terminus: 5'-nucleotidase SurE (261 aa).

A divalent metal cation is bound by residues D10, D11, S41, and N96.

The protein belongs to the SurE nucleotidase family. A divalent metal cation is required as a cofactor.

It is found in the cytoplasm. It catalyses the reaction a ribonucleoside 5'-phosphate + H2O = a ribonucleoside + phosphate. In terms of biological role, nucleotidase that shows phosphatase activity on nucleoside 5'-monophosphates. The protein is 5'-nucleotidase SurE of Methanococcoides burtonii (strain DSM 6242 / NBRC 107633 / OCM 468 / ACE-M).